Consider the following 205-residue polypeptide: Peptidyl-prolyl cis-trans isomerase B (205 aa).

The first 20 residues, 1–20 (MKFSGLWCWLLLFLSVNVIA), serve as a signal peptide directing secretion. Residues 39–198 (FFDIEHGEEK…EAVKIAKCGE (160 aa)) enclose the PPIase cyclophilin-type domain.

This sequence belongs to the cyclophilin-type PPIase family. PPIase B subfamily.

Its subcellular location is the secreted. It carries out the reaction [protein]-peptidylproline (omega=180) = [protein]-peptidylproline (omega=0). Its activity is regulated as follows. Cyclosporin A (CsA) inhibits CYPB. PPIases accelerate the folding of proteins. It catalyzes the cis-trans isomerization of proline imidic peptide bonds in oligopeptides. This is Peptidyl-prolyl cis-trans isomerase B (CPR2) from Saccharomyces cerevisiae (strain ATCC 204508 / S288c) (Baker's yeast).